The sequence spans 454 residues: tRNA modification GTPase MnmE (454 aa).

(6S)-5-formyl-5,6,7,8-tetrahydrofolate is bound by residues R23, E80, and K120. The TrmE-type G domain occupies 216-377; that stretch reads GMKVVIAGRP…LRDHLKQSMG (162 aa). Position 226 (N226) interacts with K(+). GTP is bound by residues 226 to 231, 245 to 251, 270 to 273, 335 to 338, and 358 to 360; these read NAGKSS, TDIAGTT, DTAG, NKAD, and SAR. S230 provides a ligand contact to Mg(2+). Positions 245, 247, and 250 each coordinate K(+). A Mg(2+)-binding site is contributed by T251. A (6S)-5-formyl-5,6,7,8-tetrahydrofolate-binding site is contributed by K454.

The protein belongs to the TRAFAC class TrmE-Era-EngA-EngB-Septin-like GTPase superfamily. TrmE GTPase family. In terms of assembly, homodimer. Heterotetramer of two MnmE and two MnmG subunits. K(+) serves as cofactor.

The protein resides in the cytoplasm. Exhibits a very high intrinsic GTPase hydrolysis rate. Involved in the addition of a carboxymethylaminomethyl (cmnm) group at the wobble position (U34) of certain tRNAs, forming tRNA-cmnm(5)s(2)U34. The sequence is that of tRNA modification GTPase MnmE from Yersinia pestis.